A 262-amino-acid polypeptide reads, in one-letter code: Pyridoxine 5'-phosphate synthase (262 aa).

3-amino-2-oxopropyl phosphate is bound at residue Asn6. 1-deoxy-D-xylulose 5-phosphate is bound at residue 8 to 9 (DH). Arg17 lines the 3-amino-2-oxopropyl phosphate pocket. His43 (proton acceptor) is an active-site residue. 2 residues coordinate 1-deoxy-D-xylulose 5-phosphate: Arg45 and His50. Glu70 (proton acceptor) is an active-site residue. Thr102 contacts 1-deoxy-D-xylulose 5-phosphate. His215 serves as the catalytic Proton donor. 3-amino-2-oxopropyl phosphate-binding positions include Gly216 and 237–238 (GH).

Belongs to the PNP synthase family. As to quaternary structure, homooctamer; tetramer of dimers.

It localises to the cytoplasm. The enzyme catalyses 3-amino-2-oxopropyl phosphate + 1-deoxy-D-xylulose 5-phosphate = pyridoxine 5'-phosphate + phosphate + 2 H2O + H(+). The protein operates within cofactor biosynthesis; pyridoxine 5'-phosphate biosynthesis; pyridoxine 5'-phosphate from D-erythrose 4-phosphate: step 5/5. Its function is as follows. Catalyzes the complicated ring closure reaction between the two acyclic compounds 1-deoxy-D-xylulose-5-phosphate (DXP) and 3-amino-2-oxopropyl phosphate (1-amino-acetone-3-phosphate or AAP) to form pyridoxine 5'-phosphate (PNP) and inorganic phosphate. This is Pyridoxine 5'-phosphate synthase from Helicobacter pylori (strain P12).